Reading from the N-terminus, the 569-residue chain is Proline--tRNA ligase (569 aa).

This sequence belongs to the class-II aminoacyl-tRNA synthetase family. ProS type 1 subfamily. Homodimer.

Its subcellular location is the cytoplasm. It carries out the reaction tRNA(Pro) + L-proline + ATP = L-prolyl-tRNA(Pro) + AMP + diphosphate. Catalyzes the attachment of proline to tRNA(Pro) in a two-step reaction: proline is first activated by ATP to form Pro-AMP and then transferred to the acceptor end of tRNA(Pro). As ProRS can inadvertently accommodate and process non-cognate amino acids such as alanine and cysteine, to avoid such errors it has two additional distinct editing activities against alanine. One activity is designated as 'pretransfer' editing and involves the tRNA(Pro)-independent hydrolysis of activated Ala-AMP. The other activity is designated 'posttransfer' editing and involves deacylation of mischarged Ala-tRNA(Pro). The misacylated Cys-tRNA(Pro) is not edited by ProRS. The sequence is that of Proline--tRNA ligase from Desulforamulus reducens (strain ATCC BAA-1160 / DSM 100696 / MI-1) (Desulfotomaculum reducens).